The primary structure comprises 210 residues: Large ribosomal subunit protein uL3 (210 aa).

The interval 125–151 (RHGQSRGPMSHGSRYHRRPGSMGPVAP) is disordered.

This sequence belongs to the universal ribosomal protein uL3 family. Part of the 50S ribosomal subunit. Forms a cluster with proteins L14 and L19.

Functionally, one of the primary rRNA binding proteins, it binds directly near the 3'-end of the 23S rRNA, where it nucleates assembly of the 50S subunit. The protein is Large ribosomal subunit protein uL3 of Bacillus cereus (strain ATCC 14579 / DSM 31 / CCUG 7414 / JCM 2152 / NBRC 15305 / NCIMB 9373 / NCTC 2599 / NRRL B-3711).